We begin with the raw amino-acid sequence, 260 residues long: Acetylglutamate kinase (260 aa).

Substrate is bound by residues 46–47 (GG), Arg-68, and Asn-160.

The protein belongs to the acetylglutamate kinase family. ArgB subfamily.

The protein resides in the cytoplasm. It catalyses the reaction N-acetyl-L-glutamate + ATP = N-acetyl-L-glutamyl 5-phosphate + ADP. Its pathway is amino-acid biosynthesis; L-arginine biosynthesis; N(2)-acetyl-L-ornithine from L-glutamate: step 2/4. Its function is as follows. Catalyzes the ATP-dependent phosphorylation of N-acetyl-L-glutamate. The polypeptide is Acetylglutamate kinase (Shewanella putrefaciens (strain CN-32 / ATCC BAA-453)).